An 848-amino-acid chain; its full sequence is Oligopeptide transport ATP-binding protein OppF (848 aa).

The ABC transporter domain maps to 13–785 (VKALSMMFKV…PVHPYTRSLI (773 aa)). 47–54 (GESGSGKS) is a binding site for ATP.

Belongs to the ABC transporter superfamily. The complex is composed of two ATP-binding proteins (OppD and OppF), two transmembrane proteins (OppB and OppC) and a solute-binding protein (OppA).

Its subcellular location is the cell membrane. It catalyses the reaction a [peptide](out) + ATP + H2O = a [peptide](in) + ADP + phosphate + H(+). Its function is as follows. Part of the ABC transporter complex OppABCDF involved in the uptake of oligopeptides. Probably responsible for energy coupling to the transport system. The sequence is that of Oligopeptide transport ATP-binding protein OppF (oppF) from Mycoplasma genitalium (strain ATCC 33530 / DSM 19775 / NCTC 10195 / G37) (Mycoplasmoides genitalium).